The primary structure comprises 283 residues: MDNEDQESLLLQGVPDNYGGVKVNLTEPMTIEDFVPKLRASLVYWSNQGTKGIWLKLADGLDNLIAPAKAEGFVCHHAEREYTMLTSWIADVPSTLPANASHRIGVGAFVLNKKTKEVLVVQEIDGHFKGTGVWKLPTGVVKEGENIWEGALREVEEETGIKTKFVEVLAFRESHQAFLEIKTDIFFLCELEPTTFEIKKQDSEILAAKWMPIEEYVNQPWNQKKELFRFMANICLKRLQEMEYMGFSKVLTTTSSGKESYLYCNTDHANLLNATRGLASTSG.

The Nudix hydrolase domain maps to 101-233 (SHRIGVGAFV…KKELFRFMAN (133 aa)). The Nudix box signature appears at 139–160 (GVVKEGENIWEGALREVEEETG). Residues Glu154, Glu158, and Glu204 each coordinate a divalent metal cation.

It belongs to the Nudix hydrolase family. Mg(2+) is required as a cofactor. Mn(2+) serves as cofactor. In terms of tissue distribution, expressed in stems and leaves. Weakly or not expressed in roots.

The enzyme catalyses ADP-D-ribose + H2O = D-ribose 5-phosphate + AMP + 2 H(+). It carries out the reaction NAD(+) + H2O = beta-nicotinamide D-ribonucleotide + AMP + 2 H(+). It catalyses the reaction NADH + H2O = reduced beta-nicotinamide D-ribonucleotide + AMP + 2 H(+). Functionally, probably mediates the hydrolysis of some nucleoside diphosphate derivatives. In vitro, it can use both NADH and ADP-ribose as substrates; however the relevance of such substrates in vivo is unclear. The polypeptide is Nudix hydrolase 6 (Arabidopsis thaliana (Mouse-ear cress)).